We begin with the raw amino-acid sequence, 134 residues long: MLSPKRTKFRKPHRGRLRGIATRGNTLIFGDYGLQALEPIWLTSRQIEATRRTITRQVKRVGRLWIRVFPDKSISAKPPETRMGAGKGAPEYWVAVIKPGHILFEINGVSQDLRYLAFKNASYKLPIKTKFISR.

It belongs to the universal ribosomal protein uL16 family. As to quaternary structure, part of the 50S ribosomal subunit.

The protein localises to the plastid. It is found in the chloroplast. In Guillardia theta (Cryptophyte), this protein is Large ribosomal subunit protein uL16c.